A 404-amino-acid polypeptide reads, in one-letter code: Sulfate adenylyltransferase (404 aa).

Belongs to the sulfate adenylyltransferase family.

The enzyme catalyses sulfate + ATP + H(+) = adenosine 5'-phosphosulfate + diphosphate. It participates in sulfur metabolism; hydrogen sulfide biosynthesis; sulfite from sulfate: step 1/3. This chain is Sulfate adenylyltransferase, found in Chlorobaculum tepidum (strain ATCC 49652 / DSM 12025 / NBRC 103806 / TLS) (Chlorobium tepidum).